Consider the following 402-residue polypeptide: MKYDIKLRFEVEGIVEKTDVIGAIFGQTENLFGDEFDLRELQDKGRLGRIIVEIRTKGGKSEGEIIIPSNLDRIETALIAAMVESVDKVGPYNSKFELIEIEDIRAEKLKKIIERAKGILSSWSKEKSLDIKEVINEISSAVKVGEITEYGPERLPAGPDVDKDPNLIIVEGRADVINLLRYGYKNVIAVEGATSRIPETVVSLSKMKKTVIAFLDGDHGGDLILKELLSNNVKIDFVARAPVGREVEELTGKEIAKALSNMMPLTQYLKKIQEAEQAIAKNVIAKEEKPIQLEATQQLVQITLPQNVLEEIKKLPGTLEGVLYDNNWNLIEKVQVRDIIPKLEAYEDNKVAYIVFDGVITQRLLDLASQKNIKMIIGARIGGINKRPQNVDILTFTDIISS.

Residues 165–243 (PNLIIVEGRA…KIDFVARAPV (79 aa)) enclose the Toprim domain. Mg(2+) contacts are provided by glutamate 171, aspartate 216, and aspartate 218.

This sequence belongs to the archaeal DnaG primase family. Forms a ternary complex with MCM helicase and DNA. Component of the archaeal exosome complex. It depends on Mg(2+) as a cofactor.

The catalysed reaction is ssDNA + n NTP = ssDNA/pppN(pN)n-1 hybrid + (n-1) diphosphate.. Its function is as follows. RNA polymerase that catalyzes the synthesis of short RNA molecules used as primers for DNA polymerase during DNA replication. Also part of the exosome, which is a complex involved in RNA degradation. Acts as a poly(A)-binding protein that enhances the interaction between heteromeric, adenine-rich transcripts and the exosome. In Saccharolobus islandicus (strain Y.N.15.51 / Yellowstone #2) (Sulfolobus islandicus), this protein is DNA primase DnaG.